The following is a 287-amino-acid chain: Syntaxin-11 (287 aa).

The stretch at 41–71 forms a coiled coil; sequence LESLYRDIRDIQDENQLLVADVKRLGKQNAR. Residues 204–266 form the t-SNARE coiled-coil homology domain; the sequence is LNEIESRHRE…GQAKAQVRKA (63 aa).

It belongs to the syntaxin family. As to quaternary structure, interacts with the SNARE proteins SNAP-23 and VAMP.

The protein localises to the membrane. It is found in the golgi apparatus. It localises to the trans-Golgi network membrane. SNARE that acts to regulate protein transport between late endosomes and the trans-Golgi network. The chain is Syntaxin-11 (STX11) from Homo sapiens (Human).